The following is a 141-amino-acid chain: Methylglyoxal synthase (141 aa).

Positions M1–K141 constitute an MGS-like domain. Residues H8, K12, and T34–T37 contribute to the substrate site. D60 (proton donor/acceptor) is an active-site residue. H87 is a substrate binding site.

It belongs to the methylglyoxal synthase family.

The catalysed reaction is dihydroxyacetone phosphate = methylglyoxal + phosphate. Its function is as follows. Catalyzes the formation of methylglyoxal from dihydroxyacetone phosphate. The polypeptide is Methylglyoxal synthase (Caldicellulosiruptor bescii (strain ATCC BAA-1888 / DSM 6725 / KCTC 15123 / Z-1320) (Anaerocellum thermophilum)).